A 248-amino-acid chain; its full sequence is ATP synthase subunit a (248 aa).

6 helical membrane passes run 34-54 (TNVT…LVAG), 91-111 (YFPY…LGLI), 121-141 (IAVT…IGFV), 147-167 (FLSL…LAVI), 197-217 (FAGF…VMAI), and 220-240 (LEVL…CVYL).

Belongs to the ATPase A chain family. F-type ATPases have 2 components, CF(1) - the catalytic core - and CF(0) - the membrane proton channel. CF(1) has five subunits: alpha(3), beta(3), gamma(1), delta(1), epsilon(1). CF(0) has four main subunits: a, b, b' and c.

It is found in the cell inner membrane. Key component of the proton channel; it plays a direct role in the translocation of protons across the membrane. The sequence is that of ATP synthase subunit a from Dinoroseobacter shibae (strain DSM 16493 / NCIMB 14021 / DFL 12).